The chain runs to 167 residues: MCWRPLCRFLWLWSYLSYVQAVPIQKVQDDTKTLIKTIVTRINDISHTQSVSAKQRVTGLDFIPGLHPILSLSKMDQTLAVYQQVLTSLPSQNVLQIANDLENLRDLLHLLAFSKSCSLPQTSGLQKPESLDGVLEASLYSTEVVALSRLQGSLQDILQQLDVSPEC.

The signal sequence occupies residues 1–21; it reads MCWRPLCRFLWLWSYLSYVQA. A disulfide bridge connects residues cysteine 117 and cysteine 167.

This sequence belongs to the leptin family.

The protein resides in the secreted. Functionally, key player in the regulation of energy balance and body weight control. Once released into the circulation, has central and peripheral effects by binding LEPR, found in many tissues, which results in the activation of several major signaling pathways. In the hypothalamus, acts as an appetite-regulating factor that induces a decrease in food intake and an increase in energy consumption by inducing anorexinogenic factors and suppressing orexigenic neuropeptides, also regulates bone mass and secretion of hypothalamo-pituitary-adrenal hormones. In the periphery, increases basal metabolism, influences reproductive function, regulates pancreatic beta-cell function and insulin secretion, is pro-angiogenic for endothelial cell and affects innate and adaptive immunity. In the arcuate nucleus of the hypothalamus, activates by depolarization POMC neurons inducing FOS and SOCS3 expression to release anorexigenic peptides and inhibits by hyperpolarization NPY neurons inducing SOCS3 with a consequent reduction on release of orexigenic peptides. In addition to its known satiety inducing effect, has a modulatory role in nutrient absorption. In the intestine, reduces glucose absorption by enterocytes by activating PKC and leading to a sequential activation of p38, PI3K and ERK signaling pathways which exerts an inhibitory effect on glucose absorption. Acts as a growth factor on certain tissues, through the activation of different signaling pathways increases expression of genes involved in cell cycle regulation such as CCND1, via JAK2-STAT3 pathway, or VEGFA, via MAPK1/3 and PI3K-AKT1 pathways. May also play an apoptotic role via JAK2-STAT3 pathway and up-regulation of BIRC5 expression. Pro-angiogenic, has mitogenic activity on vascular endothelial cells and plays a role in matrix remodeling by regulating the expression of matrix metalloproteinases (MMPs) and tissue inhibitors of metalloproteinases (TIMPs). In innate immunity, modulates the activity and function of neutrophils by increasing chemotaxis and the secretion of oxygen radicals. Increases phagocytosis by macrophages and enhances secretion of pro-inflammatory mediators. Increases cytotoxic ability of NK cells. Plays a pro-inflammatory role, in synergy with IL1B, by inducing NOS2 which promotes the production of IL6, IL8 and Prostaglandin E2, through a signaling pathway that involves JAK2, PI3K, MAP2K1/MEK1 and MAPK14/p38. In adaptive immunity, promotes the switch of memory T-cells towards T helper-1 cell immune responses. Increases CD4(+)CD25(-) T cells proliferation and reduces autophagy during TCR (T cell receptor) stimulation, through MTOR signaling pathway activation and BCL2 up-regulation. The chain is Leptin (Lep) from Mus musculus (Mouse).